The following is a 381-amino-acid chain: 40-kDa huntingtin-associated protein (381 aa).

A2 carries the N-acetylalanine modification. The Nuclear localization signal motif lies at 34 to 36 (KKR). The tract at residues 221–265 (QLELLPQPPSGPQPPLSGPQPRPVLGSTLPLPQPPDHAPGSVAPS) is disordered. Positions 226-242 (PQPPSGPQPPLSGPQPR) are enriched in pro residues.

In terms of assembly, interacts with HTT (via C-terminus). Interacts with RAB5A. Found in a complex with F8A1/F8A2/F8A3, HTT and RAB5A; mediates the recruitment of HTT by RAB5A onto early endosomes. In terms of tissue distribution, produced abundantly in a wide variety of cell types.

It is found in the cytoplasm. The protein localises to the nucleus. The protein resides in the early endosome. Its subcellular location is the nuclear body. Functionally, RAB5A effector molecule that is involved in vesicular trafficking of early endosomes. Mediates the recruitment of HTT by RAB5A onto early endosomes. The HTT-F8A1/F8A2/F8A3-RAB5A complex stimulates early endosomal interaction with actin filaments and inhibits interaction with microtubules, leading to the reduction of endosome motility. The polypeptide is 40-kDa huntingtin-associated protein (F8a1) (Mus musculus (Mouse)).